The primary structure comprises 110 residues: Insulin (110 aa).

The first 24 residues, 1–24, serve as a signal peptide directing secretion; that stretch reads MALWMRLLPLLVLLALWGPDPASA. Cystine bridges form between C31/C96, C43/C109, and C95/C100. A propeptide spans 57–87 (c peptide); sequence EAEDLQVGQVELGGGPGAGSLQPLALEGSLQ.

Belongs to the insulin family. As to quaternary structure, heterodimer of a B chain and an A chain linked by two disulfide bonds.

Its subcellular location is the secreted. Functionally, insulin decreases blood glucose concentration. It increases cell permeability to monosaccharides, amino acids and fatty acids. It accelerates glycolysis, the pentose phosphate cycle, and glycogen synthesis in liver. The sequence is that of Insulin (INS) from Pan troglodytes (Chimpanzee).